A 313-amino-acid chain; its full sequence is Arabinooligosaccharides transport system permease protein AraP (313 aa).

6 consecutive transmembrane segments (helical) span residues 39 to 59 (FVLS…IMSF), 91 to 111 (LEYT…LAIF), 126 to 146 (ALFI…RLIF), 176 to 196 (MFLM…LYFL), 224 to 244 (ITLP…IIGG), and 281 to 301 (MGYG…VSLI). The ABC transmembrane type-1 domain occupies 87-302 (LWNTLEYTFW…IVILVVSLIS (216 aa)).

Belongs to the binding-protein-dependent transport system permease family. MalFG subfamily. In terms of assembly, the complex is composed of two ATP-binding proteins (MsmX), two transmembrane proteins (AraP and AraQ) and a solute-binding protein (AraN).

The protein resides in the cell membrane. Functionally, part of the ABC transporter complex AraNPQ involved in the uptake of arabinooligosaccharides. Transports alpha-1,5-arabinooligosaccharides, at least up to four L-arabinosyl units. Responsible for the translocation of the substrate across the membrane. In Bacillus subtilis (strain 168), this protein is Arabinooligosaccharides transport system permease protein AraP.